Consider the following 437-residue polypeptide: MRRSSRPGSASSSRKHTPNFFSENSSMSITSEDSKGLRSAEPGPGEPEGRRARGPSCGEPALSAGVPGGTTWAGSSQQKPAPRSHNWQTACGAATVRGGASEPTGSPVVSEEPLDLLPTLDLRQEMPPPRVFKSFLSLLFQGLSVLLSLAGDVLVSMYREVCSIRFLFTAVSLLSLFLSAFWLGLLYLVSPLENEPKEMLTLSEYHERVRSQGQQLQQLQAELDKLHKEVSTVRAANSERVAKLVFQRLNEDFVRKPDYALSSVGASIDLQKTSHDYADRNTAYFWNRFSFWNYARPPTVILEPHVFPGNCWAFEGDQGQVVIQLPGRVQLSDITLQHPPPSVEHTGGANSAPRDFAVFGLQVYDETEVSLGKFTFDVEKSEIQTFHLQNDPPAAFPKVKIQILSNWGHPRFTCLYRVRAHGVRTSEGAEGSAQGPH.

Residues 1–12 are compositionally biased toward low complexity; that stretch reads MRRSSRPGSASS. Residues 1 to 88 form a disordered region; it reads MRRSSRPGSA…KPAPRSHNWQ (88 aa). 2 stretches are compositionally biased toward polar residues: residues 19 to 31 and 72 to 88; these read NFFS…SITS and WAGS…HNWQ. Transmembrane regions (helical) follow at residues 135–155 and 166–186; these read FLSL…DVLV and FLFT…LGLL. Residues 197 to 244 are a coiled coil; that stretch reads KEMLTLSEYHERVRSQGQQLQQLQAELDKLHKEVSTVRAANSERVAKL. In terms of domain architecture, SUN spans 265-425; sequence GASIDLQKTS…YRVRAHGVRT (161 aa).

As to quaternary structure, homodimer. Interacts with ODF1. May associate with microtubules. Interacts with SUN3 and SYNE1; suggesting the formation of a spermatogenesis-specific LINC complex; a SUN domain-based heterotrimer with SUN3 may associate with SYNE1. Interacts with SEPT12 and LMNB1; during spermatogenesis. Predominantly epressed in testis. Expressed in ejaculated spermatozoa (at protein level).

It localises to the membrane. Its subcellular location is the cytoplasm. It is found in the cytoskeleton. The protein localises to the flagellum axoneme. The protein resides in the nucleus envelope. It localises to the nucleus inner membrane. Functionally, involved in spermatogenesis. Required for sperm head formation but not required to establish and maintain general polarity of the sperm head. Required for anchoring and organization of the manchette. Required for targeting of SUN3 and probably SYNE1 through a probable SUN1:SYNE3 LINC complex to the nuclear envelope and involved in accurate posterior sperm head localization of the complex. May anchor SUN3 the nuclear envelope. Involved in maintenance of the nuclear envelope integrity. May assist the organization and assembly of outer dense fibers (ODFs), a specific structure of the sperm tail. The sequence is that of Sperm-associated antigen 4 protein (SPAG4) from Homo sapiens (Human).